The primary structure comprises 537 residues: Cytoplasmic 60S subunit biogenesis factor REI1 homolog (537 aa).

2 C2H2-type zinc fingers span residues 18 to 42 and 83 to 107; these read YTCNTCQVAFRNSELQRGHMRSDWH and KTCEVCQKTYYSENSFRNHLSSTKH. 2 disordered regions span residues 101-151 and 163-204; these read HLSS…AEEE and SIHD…PEAL. Residues 192–204 are compositionally biased toward low complexity; sequence EETPTTTPKPEAL. Residues 260–284 form a C2H2-type 3 zinc finger; it reads NECLTCGKMKVNVFAIQTHMRDKSH. Positions 312 to 322 are enriched in acidic residues; that stretch reads DWETEEEDKGE. Disordered stretches follow at residues 312–361 and 382–401; these read DWET…ASSL and GKHPHHSRENKKAHREADGI. Residues 323 to 339 are compositionally biased toward basic and acidic residues; sequence EDGGVRLGAKRESKVVD. The span at 340 to 356 shows a compositional bias: acidic residues; it reads ENGDEVMEDEEGWETDS. Residues 383-395 show a composition bias toward basic residues; that stretch reads KHPHHSRENKKAH.

The protein belongs to the REI1 family. Associates with nascent pre-60S particles that have not yet entered the translating pool, and is released from mature 60S subunits.

The protein localises to the cytoplasm. Its function is as follows. Pre-60S-associated factor involved in the cytoplasmic maturation of the 60S subunit. Involved in the dissociation and recycling of other late pre-60S factors before newly synthesized large ribosomal subunits enter translation. The chain is Cytoplasmic 60S subunit biogenesis factor REI1 homolog from Chaetomium thermophilum (strain DSM 1495 / CBS 144.50 / IMI 039719) (Thermochaetoides thermophila).